The chain runs to 156 residues: MPRKGPAPRRPLVADPVYNSPLVTQLVNKILLRGKRQLAETIVYEALEGCREKSGTDPVVTLKRAMDNVKPTLEVRSRRVGGATYQVPVEVRPARATTLGLRWLVTYARARREKTMVERLMNELLDASNGLGAAVKRREDTHKMAESNKAFAHYRW.

It belongs to the universal ribosomal protein uS7 family. In terms of assembly, part of the 30S ribosomal subunit. Contacts proteins S9 and S11.

Its function is as follows. One of the primary rRNA binding proteins, it binds directly to 16S rRNA where it nucleates assembly of the head domain of the 30S subunit. Is located at the subunit interface close to the decoding center, probably blocks exit of the E-site tRNA. The polypeptide is Small ribosomal subunit protein uS7 (Salinispora arenicola (strain CNS-205)).